A 377-amino-acid chain; its full sequence is Spermidine/putrescine import ATP-binding protein PotA (377 aa).

One can recognise an ABC transporter domain in the interval 18–248 (IRLSGISKSF…PKNLFVARFI (231 aa)). 50–57 (GPSGCGKT) contacts ATP.

The protein belongs to the ABC transporter superfamily. Spermidine/putrescine importer (TC 3.A.1.11.1) family. The complex is composed of two ATP-binding proteins (PotA), two transmembrane proteins (PotB and PotC) and a solute-binding protein (PotD).

The protein resides in the cell inner membrane. The enzyme catalyses ATP + H2O + polyamine-[polyamine-binding protein]Side 1 = ADP + phosphate + polyamineSide 2 + [polyamine-binding protein]Side 1.. In terms of biological role, part of the ABC transporter complex PotABCD involved in spermidine/putrescine import. Responsible for energy coupling to the transport system. This chain is Spermidine/putrescine import ATP-binding protein PotA, found in Vibrio vulnificus (strain CMCP6).